A 198-amino-acid polypeptide reads, in one-letter code: Recombination protein RecR (198 aa).

A C4-type zinc finger spans residues 57-72 (CSICGNLTESDPCAIC). The Toprim domain maps to 80–175 (TTILVVEESK…KVTRLARGLA (96 aa)).

Belongs to the RecR family.

Functionally, may play a role in DNA repair. It seems to be involved in an RecBC-independent recombinational process of DNA repair. It may act with RecF and RecO. The sequence is that of Recombination protein RecR from Lactococcus lactis subsp. lactis (strain IL1403) (Streptococcus lactis).